The primary structure comprises 113 residues: MGVNKITHVAGTGPQPEAGQTVVIEYTGWLKDSSQADGKGAEFDSSIGRGDFVTQIGVGRLIRGWDEAVLKMKVGEKATLDISSDYGYGERGFHGHIPPNADLIFDVYLKGLQ.

Positions 19–113 (GQTVVIEYTG…IFDVYLKGLQ (95 aa)) constitute a PPIase FKBP-type domain.

It belongs to the FKBP-type PPIase family. FKBP1 subfamily.

It localises to the cytoplasm. It catalyses the reaction [protein]-peptidylproline (omega=180) = [protein]-peptidylproline (omega=0). Its activity is regulated as follows. Inhibited by both FK506 and rapamycin. PPIases accelerate the folding of proteins. It catalyzes the cis-trans isomerization of proline imidic peptide bonds in oligopeptides. This Neurospora crassa (strain ATCC 24698 / 74-OR23-1A / CBS 708.71 / DSM 1257 / FGSC 987) protein is FK506-binding protein 1B (fkr-3).